A 913-amino-acid chain; its full sequence is DNA polymerase I (913 aa).

One can recognise a 5'-3' exonuclease domain in the interval 1–305 (MSQAPLVLVD…AGENGEAETP (305 aa)). Residues 306 to 501 (IQAEVDYDVV…LHQALWQKLE (196 aa)) enclose the 3'-5' exonuclease domain. Residues 505 to 913 (SLARVLTDIE…GVGSNWDEAH (409 aa)) form a polymerase region.

It belongs to the DNA polymerase type-A family. As to quaternary structure, single-chain monomer with multiple functions.

The enzyme catalyses DNA(n) + a 2'-deoxyribonucleoside 5'-triphosphate = DNA(n+1) + diphosphate. In addition to polymerase activity, this DNA polymerase exhibits 3'-5' and 5'-3' exonuclease activity. This is DNA polymerase I (polA) from Pseudomonas aeruginosa (strain ATCC 15692 / DSM 22644 / CIP 104116 / JCM 14847 / LMG 12228 / 1C / PRS 101 / PAO1).